Here is a 135-residue protein sequence, read N- to C-terminus: Small ribosomal subunit protein uS9 (135 aa).

Over residues 108-118 (VGDSRRTEPHK) the composition is skewed to basic and acidic residues. The tract at residues 108–135 (VGDSRRTEPHKPNRSTKGPRAKRQKSYR) is disordered. The span at 119–135 (PNRSTKGPRAKRQKSYR) shows a compositional bias: basic residues.

Belongs to the universal ribosomal protein uS9 family. In terms of assembly, part of the 30S ribosomal subunit.

The polypeptide is Small ribosomal subunit protein uS9 (Thermococcus kodakarensis (strain ATCC BAA-918 / JCM 12380 / KOD1) (Pyrococcus kodakaraensis (strain KOD1))).